Here is a 67-residue protein sequence, read N- to C-terminus: MKKGIHPEYIPCKVTCVTSGKEIEVLSTKPEMRIDISSFCHPFYTGSDKIADTAGRVEKFKQRYNLK.

The protein belongs to the bacterial ribosomal protein bL31 family. Type A subfamily. In terms of assembly, part of the 50S ribosomal subunit.

In terms of biological role, binds the 23S rRNA. This Helicobacter acinonychis (strain Sheeba) protein is Large ribosomal subunit protein bL31.